The chain runs to 1306 residues: Disease resistance protein Roq1 (1306 aa).

In terms of domain architecture, TIR spans 10–179 (RSYDVFLSFR…QILKDIFDKF (170 aa)). NAD(+)-binding positions include 19–24 (RGEDTR) and Gly52. Glu86 is an active-site residue. Positions 198-417 (KKLSSLLRMD…IDRLKDNPEG (220 aa)) constitute an NB-ARC domain. LRR repeat units lie at residues 200–224 (LSSLLRMDLKGVRLVGIWGMGGVGK), 252–275 (LQHHTLLYLQKTLLSKLLKVEFVD), 417–440 (GEIMATLKISFDGLRDYEKSIFLD), 599–622 (PSKLVYLTMKGSSIIELWNGAKRL), 645–669 (ITNLERLILSSCDALVEVHPSVGFL), 670–693 (KNLILLNMDHCISLERLPAIIQSE), 716–739 (MTHLKKLDLTSTGIRELPASIEHL), 741–763 (SLENLQMHSCNQLVSLPSSIWRF), 784–807 (SNCTRELILKLVSIKELPTSIGNL), 808–831 (TSLNFLEICNCKTISSLSSSIWGL), 832–857 (TSLTTLKLLDCRKLKNLPGIPNAINH), 878–902 (LDLLRIIDMSWCSCISSLPHNIWML), 904–926 (FLRILCISYCSRLEYLPENLGHL), 927–949 (EHLEELLADGTGILRLPSSVARL), 961–983 (FAIGPKVQYSSSMLNLPDDVFGS), 987–1010 (LGSVVKLNLSGNGFCNLPETMNQL), 1013–1036 (LEYLDITFCQRLEALPELPPSIKE), and 1045–1070 (LRIMEDLVIKCKELNLIAVTKIEYQN).

Belongs to the disease resistance TIR-NB-LRR family. Homodimer.

The catalysed reaction is NAD(+) + H2O = ADP-D-ribose + nicotinamide + H(+). It catalyses the reaction NAD(+) = 2'cADPR + nicotinamide + H(+). Its function is as follows. Disease resistance (R) protein that specifically recognizes the Xanthomonas and Pseudomonas effector proteins XopQ and HopQ1, and triggers cell death. An NAD(+) hydrolase (NADase): in response to activation, catalyzes cleavage of NAD(+) into ADP-D-ribose (ADPR) and nicotinamide; NAD(+) cleavage triggers a defense system that promotes cell death. Makes small amounts of 2' cyclic ADPR (2'cADPR). The sequence is that of Disease resistance protein Roq1 from Nicotiana benthamiana.